We begin with the raw amino-acid sequence, 112 residues long: Cytochrome c2 (112 aa).

Heme c contacts are provided by Cys14, Cys17, His18, and Met91.

Belongs to the cytochrome c family. Binds 1 heme c group covalently per subunit.

Cytochrome c2 is found mainly in purple, non-sulfur, photosynthetic bacteria where it functions as the electron donor to the oxidized bacteriochlorophyll in the photophosphorylation pathway. However, it may also have a role in the respiratory chain and is found in some non-photosynthetic bacteria. This chain is Cytochrome c2 (cycA), found in Rhodospirillum rubrum.